Reading from the N-terminus, the 41-residue chain is Large ribosomal subunit protein bL36 (41 aa).

Belongs to the bacterial ribosomal protein bL36 family.

This chain is Large ribosomal subunit protein bL36, found in Vibrio vulnificus (strain YJ016).